The primary structure comprises 195 residues: Interferon omega-1 (195 aa).

Positions 1-21 form a signal peptide, or 23 in some molecules; the sequence is MALLFPLLAALVMTSYSPVGS. 2 cysteine pairs are disulfide-bonded: Cys-24-Cys-122 and Cys-52-Cys-162. The N-linked (GlcNAc...) asparagine glycan is linked to Asn-101.

Belongs to the alpha/beta interferon family.

The protein resides in the secreted. This Homo sapiens (Human) protein is Interferon omega-1 (IFNW1).